Reading from the N-terminus, the 282-residue chain is DNA-directed RNA polymerase III subunit RPC5 (282 aa).

The interval 1-70 (MSIDNKLFVT…TGEEEEDDPV (70 aa)) is disordered. Composition is skewed to acidic residues over residues 10–35 (TEEDEEDRTQDRADVEDESNDIDMIA) and 60–70 (DTGEEEEDDPV). T61 carries the post-translational modification Phosphothreonine.

In terms of assembly, component of the RNA polymerase III (Pol III) complex consisting of 17 subunits. Interacts with RPC53/RPC4. RPC53/RPC4, RPC37/RPC5 and RPC11/RPC10 probably form a Pol III subcomplex.

The protein resides in the nucleus. Functionally, DNA-dependent RNA polymerase catalyzes the transcription of DNA into RNA using the four ribonucleoside triphosphates as substrates. Specific peripheric component of RNA polymerase III which synthesizes small RNAs, such as 5S rRNA and tRNAs. The RPC53/RPC4-RPC37/RPC5 subcomplex is required for terminator recognition and reinitiation. This chain is DNA-directed RNA polymerase III subunit RPC5 (RPC37), found in Saccharomyces cerevisiae (strain ATCC 204508 / S288c) (Baker's yeast).